Reading from the N-terminus, the 301-residue chain is Glycine--tRNA ligase alpha subunit (301 aa).

The protein belongs to the class-II aminoacyl-tRNA synthetase family. Tetramer of two alpha and two beta subunits.

The protein resides in the cytoplasm. It carries out the reaction tRNA(Gly) + glycine + ATP = glycyl-tRNA(Gly) + AMP + diphosphate. This Neisseria meningitidis serogroup C (strain 053442) protein is Glycine--tRNA ligase alpha subunit.